We begin with the raw amino-acid sequence, 804 residues long: Phenylalanine--tRNA ligase beta subunit (804 aa).

One can recognise a tRNA-binding domain in the interval 40–155; it reads GEGIKGVVIG…NDAETGSDAL (116 aa). The B5 domain maps to 409-484; sequence IEANNIHVSA…RLYGYDNIPS (76 aa). Positions 462, 468, 471, and 472 each coordinate Mg(2+). The FDX-ACB domain maps to 710 to 803; it reads PKYPSVTRDI…LEDTYQAVLR (94 aa).

Belongs to the phenylalanyl-tRNA synthetase beta subunit family. Type 1 subfamily. Tetramer of two alpha and two beta subunits. Mg(2+) serves as cofactor.

It localises to the cytoplasm. It catalyses the reaction tRNA(Phe) + L-phenylalanine + ATP = L-phenylalanyl-tRNA(Phe) + AMP + diphosphate + H(+). This chain is Phenylalanine--tRNA ligase beta subunit (pheT), found in Bacillus subtilis (strain 168).